We begin with the raw amino-acid sequence, 405 residues long: Tryptophan synthase beta chain (405 aa).

Residue Lys-98 is modified to N6-(pyridoxal phosphate)lysine.

This sequence belongs to the TrpB family. In terms of assembly, tetramer of two alpha and two beta chains. It depends on pyridoxal 5'-phosphate as a cofactor.

It catalyses the reaction (1S,2R)-1-C-(indol-3-yl)glycerol 3-phosphate + L-serine = D-glyceraldehyde 3-phosphate + L-tryptophan + H2O. Its pathway is amino-acid biosynthesis; L-tryptophan biosynthesis; L-tryptophan from chorismate: step 5/5. Its function is as follows. The beta subunit is responsible for the synthesis of L-tryptophan from indole and L-serine. This chain is Tryptophan synthase beta chain, found in Xanthomonas campestris pv. campestris (strain 8004).